The following is a 194-amino-acid chain: dCTP deaminase, dUMP-forming (194 aa).

DCTP-binding positions include 104-109 (RSSLGR), aspartate 122, 130-132 (TLE), glutamine 151, tyrosine 165, lysine 172, and glutamine 176. The active-site Proton donor/acceptor is the glutamate 132.

Belongs to the dCTP deaminase family. In terms of assembly, homotrimer.

It carries out the reaction dCTP + 2 H2O = dUMP + NH4(+) + diphosphate. Its pathway is pyrimidine metabolism; dUMP biosynthesis; dUMP from dCTP: step 1/1. Functionally, bifunctional enzyme that catalyzes both the deamination of dCTP to dUTP and the hydrolysis of dUTP to dUMP without releasing the toxic dUTP intermediate. The polypeptide is dCTP deaminase, dUMP-forming (Dictyoglomus thermophilum (strain ATCC 35947 / DSM 3960 / H-6-12)).